Consider the following 354-residue polypeptide: DNA repair protein rhp57 (354 aa).

Gly100–Ser107 is a binding site for ATP.

The protein belongs to the RecA family.

It localises to the nucleus. Functionally, involved in recombination DNA repair and in the repair of gamma-ray-induced damage. This Schizosaccharomyces pombe (strain 972 / ATCC 24843) (Fission yeast) protein is DNA repair protein rhp57 (rhp57).